The primary structure comprises 267 residues: Membrane-spanning 4-domains subfamily A member 10 (267 aa).

Residues 1–56 (MAGQAPTAVPGSVTGEVSRWQNLGPAQPAQKVAQPQNLVPDGHLEKALEGSDLLQK) lie on the Cytoplasmic side of the membrane. Residues 57–77 (LGGFHIAIAFAHLAFGGYLIS) form a helical membrane-spanning segment. The Extracellular portion of the chain corresponds to 78-83 (TVKNLH). The helical transmembrane segment at 84-104 (LVVLKCWYPLWGTVSFLVAGM) threads the bilayer. Residues 105–118 (AAMTTVTFPKTSLK) lie on the Cytoplasmic side of the membrane. A helical membrane pass occupies residues 119–139 (VLCVIANVISLFCALAGFFVI). Topologically, residues 140–168 (AKDLFLEGPFPWPIWRPYPEPTTYIQRLE) are extracellular. The chain crosses the membrane as a helical span at residues 169–189 (LTLFCFTFLEIFLSGSTAITA). Residues 190-267 (YRMKRLQAED…LHTGPRTLRK (78 aa)) are Cytoplasmic-facing.

It belongs to the MS4A family. Expressed in thymus, kidney, colon, brain and testis. Expressed also by various hematopoietic and lymphoblastoid cell lines.

The protein resides in the membrane. Functionally, may be involved in signal transduction as a component of a multimeric receptor complex. The protein is Membrane-spanning 4-domains subfamily A member 10 (Ms4a10) of Mus musculus (Mouse).